A 122-amino-acid chain; its full sequence is Large ribosomal subunit protein uL14 (122 aa).

It belongs to the universal ribosomal protein uL14 family. Part of the 50S ribosomal subunit. Forms a cluster with proteins L3 and L19. In the 70S ribosome, L14 and L19 interact and together make contacts with the 16S rRNA in bridges B5 and B8.

Its function is as follows. Binds to 23S rRNA. Forms part of two intersubunit bridges in the 70S ribosome. The polypeptide is Large ribosomal subunit protein uL14 (Azoarcus sp. (strain BH72)).